A 126-amino-acid polypeptide reads, in one-letter code: C-type natriuretic peptide (126 aa).

The first 23 residues, 1-23, serve as a signal peptide directing secretion; that stretch reads MHLSQLLACALLLTLLSLRPSEA. The tract at residues 20-71 is disordered; the sequence is PSEAKPGAPPKVPRTPPAEELAEPQAAGGGQKKGDKAPGGGGANLKGDRSRL. A propeptide spanning residues 24-73 is cleaved from the precursor; sequence KPGAPPKVPRTPPAEELAEPQAAGGGQKKGDKAPGGGGANLKGDRSRLLR. Over residues 26 to 35 the composition is skewed to pro residues; it reads GAPPKVPRTP. Over residues 46–63 the composition is skewed to gly residues; that stretch reads AGGGQKKGDKAPGGGGAN. Cysteines 110 and 126 form a disulfide.

This sequence belongs to the natriuretic peptide family. Degraded by IDE (in vitro). In the kidney, predominantly expressed in the distal tubular cells (at protein level).

Its subcellular location is the secreted. Functionally, hormone which plays a role in endochondral ossification through regulation of cartilaginous growth plate chondrocytes proliferation and differentiation. May also be vasoactive and natriuretic. Acts by specifically binding and stimulating NPR2 to produce cGMP. Binds the clearance receptor NPR3. This chain is C-type natriuretic peptide (NPPC), found in Homo sapiens (Human).